The following is a 282-amino-acid chain: DegV domain-containing protein M6_Spy0690 (282 aa).

One can recognise a DegV domain in the interval Leu-3 to Pro-280. Hexadecanoate-binding residues include Thr-61 and Ser-94.

Functionally, may bind long-chain fatty acids, such as palmitate, and may play a role in lipid transport or fatty acid metabolism. The sequence is that of DegV domain-containing protein M6_Spy0690 from Streptococcus pyogenes serotype M6 (strain ATCC BAA-946 / MGAS10394).